A 114-amino-acid polypeptide reads, in one-letter code: Protein S100-A9 (114 aa).

Threonine 2 is subject to Blocked amino end (Thr). Cysteine 3 is subject to S-nitrosocysteine; transient. EF-hand domains lie at 12-47 and 54-89; these read IETI…DLQN and KNEK…LTWA. Histidine 20 is a Zn(2+) binding site. 3 residues coordinate Ca(2+): serine 23, leucine 26, and histidine 28. Aspartate 30 contacts Zn(2+). Ca(2+)-binding residues include threonine 31, glutamate 36, aspartate 67, asparagine 69, aspartate 71, glutamine 73, and glutamate 78. Positions 91 and 95 each coordinate Zn(2+). The span at 93 to 102 shows a compositional bias: basic and acidic residues; sequence KMHEGDEGPG. Positions 93 to 114 are disordered; sequence KMHEGDEGPGHHHKPGLGEGTP. A Pros-methylhistidine modification is found at histidine 105. The residue at position 113 (threonine 113) is a Phosphothreonine; by MAPK14.

As to quaternary structure, homodimer. Preferentially exists as a heterodimer or heterotetramer with S100A8 known as calprotectin (S100A8/A9). S100A9 interacts with ATP2A2. S100A9 interacts with AGER, and with the heterodimeric complex formed by TLR4 and LY96 in the presence of calcium and/or zinc ions. S100A9 binds quinoline-3-carboxamides in the presence of calcium and/or zinc ions. S100A9 interacts with amyloid-beta protein 40. Calprotectin (S100A8/9) interacts with CEACAM3 and tubulin filaments in a calcium-dependent manner. Heterotetrameric calprotectin (S100A8/A9) interacts with ANXA6 and associates with tubulin filaments in activated monocytes. Calprotectin (S100A8/9) interacts with NCF2/P67PHOX, RAC1, RAC2, CYBA and CYBB. Calprotectin (S100A8/9) interacts with NOS2 to form the iNOS-S100A8/A9 transnitrosylase complex; induced by LDL(ox). Calprotectin (S100A8/9) interacts with CD69. Phosphorylated. Phosphorylation inhibits activation of tubulin polymerization. In terms of processing, S-nitrosylation of Cys-3 is implicated in LDL(ox)-induced S-nitrosylation of GAPDH at 'Cys-247' through a transnitrosylase mechanism involving a iNOS-S100A8/9 complex. Post-translationally, methylation at His-105 by METTL9 reduces zinc-binding without affecting heterodimerization with S100A8. Calprotectin (S100A8/9) is predominantly expressed in myeloid cells. Except for inflammatory conditions, the expression is restricted to a specific stage of myeloid differentiation since both proteins are expressed in circulating neutrophils and monocytes but are absent in normal tissue macrophages and lymphocytes. Under chronic inflammatory conditions, such as psoriasis and malignant disorders, also expressed in the epidermis. Found in high concentrations at local sites of inflammation or in the serum of patients with inflammatory diseases such as rheumatoid, cystic fibrosis, inflammatory bowel disease, Crohn's disease, giant cell arteritis, cystic fibrosis, Sjogren's syndrome, systemic lupus erythematosus, and progressive systemic sclerosis. Involved in the formation and deposition of amyloids in the aging prostate known as corpora amylacea inclusions. Strongly up-regulated in many tumors, including gastric, esophageal, colon, pancreatic, bladder, ovarian, thyroid, breast and skin cancers.

The protein localises to the secreted. It localises to the cytoplasm. It is found in the cytoskeleton. The protein resides in the cell membrane. In terms of biological role, S100A9 is a calcium- and zinc-binding protein which plays a prominent role in the regulation of inflammatory processes and immune response. It can induce neutrophil chemotaxis, adhesion, can increase the bactericidal activity of neutrophils by promoting phagocytosis via activation of SYK, PI3K/AKT, and ERK1/2 and can induce degranulation of neutrophils by a MAPK-dependent mechanism. Predominantly found as calprotectin (S100A8/A9) which has a wide plethora of intra- and extracellular functions. The intracellular functions include: facilitating leukocyte arachidonic acid trafficking and metabolism, modulation of the tubulin-dependent cytoskeleton during migration of phagocytes and activation of the neutrophilic NADPH-oxidase. Also participates in regulatory T-cell differentiation together with CD69. Activates NADPH-oxidase by facilitating the enzyme complex assembly at the cell membrane, transferring arachidonic acid, an essential cofactor, to the enzyme complex and S100A8 contributes to the enzyme assembly by directly binding to NCF2/P67PHOX. The extracellular functions involve pro-inflammatory, antimicrobial, oxidant-scavenging and apoptosis-inducing activities. Its pro-inflammatory activity includes recruitment of leukocytes, promotion of cytokine and chemokine production, and regulation of leukocyte adhesion and migration. Acts as an alarmin or a danger associated molecular pattern (DAMP) molecule and stimulates innate immune cells via binding to pattern recognition receptors such as Toll-like receptor 4 (TLR4) and receptor for advanced glycation endproducts (AGER). Binding to TLR4 and AGER activates the MAP-kinase and NF-kappa-B signaling pathways resulting in the amplification of the pro-inflammatory cascade. Has antimicrobial activity towards bacteria and fungi and exerts its antimicrobial activity probably via chelation of Zn(2+) which is essential for microbial growth. Can induce cell death via autophagy and apoptosis and this occurs through the cross-talk of mitochondria and lysosomes via reactive oxygen species (ROS) and the process involves BNIP3. Can regulate neutrophil number and apoptosis by an anti-apoptotic effect; regulates cell survival via ITGAM/ITGB and TLR4 and a signaling mechanism involving MEK-ERK. Its role as an oxidant scavenger has a protective role in preventing exaggerated tissue damage by scavenging oxidants. Can act as a potent amplifier of inflammation in autoimmunity as well as in cancer development and tumor spread. Has transnitrosylase activity; in oxidatively-modified low-densitity lipoprotein (LDL(ox))-induced S-nitrosylation of GAPDH on 'Cys-247' proposed to transfer the NO moiety from NOS2/iNOS to GAPDH via its own S-nitrosylated Cys-3. The iNOS-S100A8/A9 transnitrosylase complex is proposed to also direct selective inflammatory stimulus-dependent S-nitrosylation of multiple targets such as ANXA5, EZR, MSN and VIM by recognizing a [IL]-x-C-x-x-[DE] motif. The sequence is that of Protein S100-A9 from Homo sapiens (Human).